A 101-amino-acid polypeptide reads, in one-letter code: Large ribosomal subunit protein bL27 (101 aa).

Positions M1–F9 are excised as a propeptide.

It belongs to the bacterial ribosomal protein bL27 family. The N-terminus is cleaved by ribosomal processing cysteine protease Prp.

The polypeptide is Large ribosomal subunit protein bL27 (Clostridium tetani (strain Massachusetts / E88)).